A 136-amino-acid chain; its full sequence is Large ribosomal subunit protein uL16 (136 aa).

This sequence belongs to the universal ribosomal protein uL16 family. Part of the 50S ribosomal subunit.

In terms of biological role, binds 23S rRNA and is also seen to make contacts with the A and possibly P site tRNAs. This chain is Large ribosomal subunit protein uL16, found in Buchnera aphidicola subsp. Acyrthosiphon pisum (strain 5A).